The following is a 542-amino-acid chain: Glucose-6-phosphate isomerase (542 aa).

E353 acts as the Proton donor in catalysis. Active-site residues include H384 and K508.

It belongs to the GPI family.

It localises to the cytoplasm. It catalyses the reaction alpha-D-glucose 6-phosphate = beta-D-fructose 6-phosphate. It participates in carbohydrate biosynthesis; gluconeogenesis. It functions in the pathway carbohydrate degradation; glycolysis; D-glyceraldehyde 3-phosphate and glycerone phosphate from D-glucose: step 2/4. Its function is as follows. Catalyzes the reversible isomerization of glucose-6-phosphate to fructose-6-phosphate. The sequence is that of Glucose-6-phosphate isomerase from Corynebacterium efficiens (strain DSM 44549 / YS-314 / AJ 12310 / JCM 11189 / NBRC 100395).